The primary structure comprises 568 residues: Sulfite reductase [NADPH] hemoprotein beta-component (568 aa).

[4Fe-4S] cluster contacts are provided by Cys-425, Cys-431, Cys-470, and Cys-474. Residue Cys-474 participates in siroheme binding.

This sequence belongs to the nitrite and sulfite reductase 4Fe-4S domain family. In terms of assembly, alpha(8)-beta(8). The alpha component is a flavoprotein, the beta component is a hemoprotein. Siroheme is required as a cofactor. The cofactor is [4Fe-4S] cluster.

It carries out the reaction hydrogen sulfide + 3 NADP(+) + 3 H2O = sulfite + 3 NADPH + 4 H(+). The protein operates within sulfur metabolism; hydrogen sulfide biosynthesis; hydrogen sulfide from sulfite (NADPH route): step 1/1. Component of the sulfite reductase complex that catalyzes the 6-electron reduction of sulfite to sulfide. This is one of several activities required for the biosynthesis of L-cysteine from sulfate. In Xanthomonas oryzae pv. oryzae (strain MAFF 311018), this protein is Sulfite reductase [NADPH] hemoprotein beta-component.